Here is a 412-residue protein sequence, read N- to C-terminus: Polyferredoxin protein MvhB (412 aa).

4Fe-4S ferredoxin-type domains follow at residues 2-29 (IIVN…VTPE), 30-57 (DVIY…LEDL), 67-96 (GRIV…LDEG), 97-127 (KVKK…VEGI), 138-166 (EGPI…LDKV), 168-197 (GVIE…ISGR), 207-236 (KKFE…PRTS), 238-266 (LTVE…LEVE), 276-305 (EGLV…VVTK), 314-345 (EKVD…LVDM), 357-386 (KRVQ…LTDE), and 385-412 (DEKV…LSLK). [4Fe-4S] cluster-binding residues include C9, C12, C15, and C19. C76, C79, C82, C86, C107, C110, C113, C117, C146, C149, C152, C156, C177, C180, C183, C187, C216, C219, C222, C226, C246, C249, C252, and C256 together coordinate [4Fe-4S] cluster. C325, C328, C331, C335, C366, C369, C372, C376, C394, C397, C400, and C404 together coordinate [4Fe-4S] cluster.

[4Fe-4S] cluster is required as a cofactor.

The sequence is that of Polyferredoxin protein MvhB (mvhB) from Methanothermobacter thermautotrophicus (strain ATCC 29096 / DSM 1053 / JCM 10044 / NBRC 100330 / Delta H) (Methanobacterium thermoautotrophicum).